A 261-amino-acid chain; its full sequence is Carnitinyl-CoA dehydratase (261 aa).

The Nucleophile role is filled by E111. The Proton acceptor role is filled by E131.

This sequence belongs to the enoyl-CoA hydratase/isomerase family.

The catalysed reaction is (R)-carnitinyl-CoA = crotonobetainyl-CoA + H2O. The protein operates within amine and polyamine metabolism; carnitine metabolism. Functionally, catalyzes the reversible dehydration of L-carnitinyl-CoA to crotonobetainyl-CoA. The polypeptide is Carnitinyl-CoA dehydratase (Salmonella typhimurium (strain LT2 / SGSC1412 / ATCC 700720)).